A 354-amino-acid chain; its full sequence is Guanine nucleotide-binding protein G(t) subunit alpha-3 (354 aa).

Residues 1-27 (MGSGISSESKESAKRSKELEKKLQEDA) are disordered. Gly-2 carries the N-myristoyl glycine lipid modification. Residues 8-27 (ESKESAKRSKELEKKLQEDA) are compositionally biased toward basic and acidic residues. In terms of domain architecture, G-alpha spans 32-354 (RTVKLLLLGA…KENLKDCGLF (323 aa)). The G1 motif stretch occupies residues 35 to 48 (KLLLLGAGESGKST). Residues 40–47 (GAGESGKS), 175–181 (LHSRVKT), 200–204 (DVGGQ), 269–272 (NKKD), and Ala-326 each bind GTP. 2 residues coordinate Mg(2+): Ser-47 and Thr-181. The interval 173–181 (DVLHSRVKT) is G2 motif. A G3 motif region spans residues 196 to 205 (FRMFDVGGQR). Positions 265 to 272 (VLFLNKKD) are G4 motif. A G5 motif region spans residues 324–329 (TCATDT).

It belongs to the G-alpha family. G(i/o/t/z) subfamily. In terms of assembly, g proteins are composed of 3 units; alpha, beta and gamma, respectively GNAT3, GNB1 and GNG13 for Gustducin heterotrimer for bitter taste transduction. The alpha chain contains the guanine nucleotide binding site. Component of the TAS2R14-GNAT3 complex, consisting of TAS2R14, GNAT3, GNB1 and GNG2; within the complex interacts with TAS2R14; this complex plays a role in the perception of bitterness. Gustducin heterotrimer may also be composed of GNAT3, GNB3 and GNG13. Potential N-myristoylation may anchor alpha-subunit to the inner surface of plasma membrane. In terms of tissue distribution, expressed in taste buds (sensory organs of clustered epithelial cells) of the circumvallate, foliate and fungiform papillae of the tongue, as well as in nasoincisor, palatal and epiglottal taste buds at protein level. Expressed in enteroendocrine of the gut, in the lumenal pole of a subset of brush cells lining the stomach and the intestine at protein level. Detected in solitary cells throughout the respiratory track. Expressed also in spermatozoa.

It localises to the cytoplasm. Functionally, guanine nucleotide-binding protein (G protein) alpha subunit playing a prominent role in bitter and sweet taste transduction as well as in umami (monosodium glutamate, monopotassium glutamate, and inosine monophosphate) taste transduction. Transduction by this alpha subunit involves coupling of specific cell-surface receptors with a cGMP-phosphodiesterase; Activation of phosphodiesterase lowers intracellular levels of cAMP and cGMP which may open a cyclic nucleotide-suppressible cation channel leading to influx of calcium, ultimately leading to release of neurotransmitter. Indeed, denatonium and strychnine induce transient reduction in cAMP and cGMP in taste tissue, whereas this decrease is inhibited by GNAT3 antibody. Gustducin heterotrimer transduces response to bitter and sweet compounds via regulation of phosphodiesterase for alpha subunit, as well as via activation of phospholipase C for beta and gamma subunits, with ultimate increase inositol trisphosphate and increase of intracellular Calcium. GNAT3 can functionally couple to taste receptors to transmit intracellular signal: receptor heterodimer TAS1R2/TAS1R3 senses sweetness and TAS1R1/TAS1R3 transduces umami taste, whereas the T2R family GPCRs act as bitter sensors. Also functions as lumenal sugar sensors in the gut to control the expression of the Na+-glucose transporter SGLT1 in response to dietaty sugar, as well as the secretion of Glucagon-like peptide-1, GLP-1 and glucose-dependent insulinotropic polypeptide, GIP. Thus, may modulate the gut capacity to absorb sugars, with implications for the prevention and treatment of malabsorption syndromes and diet-related disorders including diabetes and obesity. This Rattus norvegicus (Rat) protein is Guanine nucleotide-binding protein G(t) subunit alpha-3 (Gnat3).